The following is a 472-amino-acid chain: 3-isopropylmalate dehydratase large subunit (472 aa).

[4Fe-4S] cluster is bound by residues Cys350, Cys411, and Cys414.

This sequence belongs to the aconitase/IPM isomerase family. LeuC type 1 subfamily. Heterodimer of LeuC and LeuD. It depends on [4Fe-4S] cluster as a cofactor.

The enzyme catalyses (2R,3S)-3-isopropylmalate = (2S)-2-isopropylmalate. It functions in the pathway amino-acid biosynthesis; L-leucine biosynthesis; L-leucine from 3-methyl-2-oxobutanoate: step 2/4. Its function is as follows. Catalyzes the isomerization between 2-isopropylmalate and 3-isopropylmalate, via the formation of 2-isopropylmaleate. The polypeptide is 3-isopropylmalate dehydratase large subunit (Alcanivorax borkumensis (strain ATCC 700651 / DSM 11573 / NCIMB 13689 / SK2)).